We begin with the raw amino-acid sequence, 148 residues long: 3-hydroxyacyl-[acyl-carrier-protein] dehydratase FabZ (148 aa).

His55 is a catalytic residue.

It belongs to the thioester dehydratase family. FabZ subfamily.

The protein localises to the cytoplasm. It carries out the reaction a (3R)-hydroxyacyl-[ACP] = a (2E)-enoyl-[ACP] + H2O. Functionally, involved in unsaturated fatty acids biosynthesis. Catalyzes the dehydration of short chain beta-hydroxyacyl-ACPs and long chain saturated and unsaturated beta-hydroxyacyl-ACPs. In Haemophilus influenzae (strain 86-028NP), this protein is 3-hydroxyacyl-[acyl-carrier-protein] dehydratase FabZ.